The following is a 595-amino-acid chain: Polyadenylate-binding protein-interacting protein 4 (595 aa).

The 66-residue stretch at 48–113 (RLVYFTTCKI…SRSEFVRKPP (66 aa)) folds into the Sm domain. 2 stretches are compositionally biased toward polar residues: residues 302–313 (GGSSTSDGQKPA) and 326–346 (GDSQ…TSKQ). 2 disordered regions span residues 302–505 (GGSS…FYYP) and 536–595 (MYHP…KGRE). Over residues 364–382 (DEQRRKNNEEVSHNNRSAE) the composition is skewed to basic and acidic residues. The segment covering 416–465 (SQVSSKTKSESSFGQSASRSSESRPGPSTSSRPGLSPSSSIGSMASSEKS) has biased composition (low complexity). The PAM2-like 1; degenerate signature appears at 466–474 (TLNPNAKEF). Positions 475-485 (KLNPKAKSFKP) match the PAM2-like 2 motif. Low complexity-rich tracts occupy residues 488-501 (SAAA…ADAS) and 548-570 (QPQY…PGQQ).

In terms of tissue distribution, expressed in cauline leaves, stems, rosette leaves, immature siliques and primary inflorescences.

In Arabidopsis thaliana (Mouse-ear cress), this protein is Polyadenylate-binding protein-interacting protein 4 (CID4).